The following is a 797-amino-acid chain: GDH/6PGL endoplasmic bifunctional protein (797 aa).

An N-terminal signal peptide occupies residues 1-24 (MKCPGVWGMLTVTMCVVFLGCPQA). Residue glutamine 25 is modified to Pyrrolidone carboxylic acid. The segment at 25-531 (QELQGHVSVI…SGSHLSFSLG (507 aa)) is hexose-6-phosphate dehydrogenase. Residues 37–44 (GATGDLAK) and tyrosine 154 each bind NADP(+). N-linked (GlcNAc...) asparagine glycosylation is present at asparagine 162. Position 179 (lysine 179) interacts with NADP(+). Residues lysine 179, 209 to 213 (HYLGK), glutamate 248, and aspartate 267 contribute to the D-glucose 6-phosphate site. Lysine 213 carries the N6-succinyllysine modification. Residue histidine 272 is the Proton acceptor of the active site. An N-linked (GlcNAc...) asparagine glycan is attached at asparagine 287. Positions 365 and 370 each coordinate D-glucose 6-phosphate. Residue arginine 375 coordinates NADP(+). The segment at 532–545 (QPEQLVPGPGSTPR) is linker. Positions 546 to 797 (PSDFQVLGAK…WYMDYEAFLG (252 aa)) are 6-phosphogluconolactonase. Position 623 (tryptophan 623) interacts with NADP(+). An N-linked (GlcNAc...) asparagine glycan is attached at asparagine 689.

This sequence in the N-terminal section; belongs to the glucose-6-phosphate dehydrogenase family. In the C-terminal section; belongs to the glucosamine/galactosamine-6-phosphate isomerase family. 6-phosphogluconolactonase subfamily. Homodimer.

It is found in the endoplasmic reticulum lumen. The enzyme catalyses D-glucose 6-phosphate + NAD(+) = 6-phospho-D-glucono-1,5-lactone + NADH + H(+). The catalysed reaction is D-glucose 6-phosphate + NADP(+) = 6-phospho-D-glucono-1,5-lactone + NADPH + H(+). It catalyses the reaction 6-phospho-D-glucono-1,5-lactone + H2O = 6-phospho-D-gluconate + H(+). It carries out the reaction 2-deoxy-D-glucose 6-phosphate + NAD(+) = 2-deoxy-6-phospho-D-glucono-1,5-lactone + NADH + H(+). The enzyme catalyses 2-deoxy-D-glucose 6-phosphate + NADP(+) = 2-deoxy-6-phospho-D-glucono-1,5-lactone + NADPH + H(+). The catalysed reaction is D-galactose 6-phosphate + NADP(+) = 6-phospho-D-galactono-1,5-lactone + NADPH + H(+). It catalyses the reaction D-galactose 6-phosphate + NAD(+) = 6-phospho-D-galactono-1,5-lactone + NADH + H(+). It carries out the reaction D-glucosamine 6-phosphate + NADP(+) = 2-amino-2-deoxy-6-phospho-D-glucono-1,5-lactone + NADPH + 2 H(+). The enzyme catalyses D-glucose + NAD(+) = D-glucono-1,5-lactone + NADH + H(+). The catalysed reaction is D-glucose + NADP(+) = D-glucono-1,5-lactone + NADPH + H(+). It catalyses the reaction D-glucose 6-sulfate + NADP(+) = 6-sulfo-D-glucono-1,5-lactone + NADPH + H(+). The protein operates within carbohydrate degradation; pentose phosphate pathway; D-ribulose 5-phosphate from D-glucose 6-phosphate (oxidative stage). Its pathway is carbohydrate degradation; pentose phosphate pathway; D-ribulose 5-phosphate from D-glucose 6-phosphate (oxidative stage): step 2/3. Its function is as follows. Bifunctional enzyme localized in the lumen of the endoplasmic reticulum that catalyzes the first two steps of the oxidative branch of the pentose phosphate pathway/shunt, an alternative to glycolysis and a major source of reducing power and metabolic intermediates for biosynthetic processes. Has a hexose-6-phosphate dehydrogenase activity, with broad substrate specificity compared to glucose-6-phosphate 1-dehydrogenase/G6PD, and catalyzes the first step of the pentose phosphate pathway. In addition, acts as a 6-phosphogluconolactonase and catalyzes the second step of the pentose phosphate pathway. May have a dehydrogenase activity for alternative substrates including glucosamine 6-phosphate and glucose 6-sulfate. The main function of this enzyme is to provide reducing equivalents such as NADPH to maintain the adequate levels of reductive cofactors in the oxidizing environment of the endoplasmic reticulum. By producing NADPH that is needed by reductases of the lumen of the endoplasmic reticulum like corticosteroid 11-beta-dehydrogenase isozyme 1/HSD11B1, indirectly regulates their activity. This Oryctolagus cuniculus (Rabbit) protein is GDH/6PGL endoplasmic bifunctional protein.